A 410-amino-acid chain; its full sequence is Peptidase T (410 aa).

His-79 serves as a coordination point for Zn(2+). The active site involves Asp-81. A Zn(2+)-binding site is contributed by Asp-142. Glu-176 acts as the Proton acceptor in catalysis. Zn(2+) is bound by residues Glu-177, Asp-199, and His-381.

The protein belongs to the peptidase M20B family. Zn(2+) is required as a cofactor.

The protein resides in the cytoplasm. It catalyses the reaction Release of the N-terminal residue from a tripeptide.. Functionally, cleaves the N-terminal amino acid of tripeptides. The protein is Peptidase T of Listeria innocua serovar 6a (strain ATCC BAA-680 / CLIP 11262).